The sequence spans 713 residues: Probable arginine--tRNA ligase, cytoplasmic (713 aa).

The interval 74–113 is disordered; sequence KNKKNGVKATSTSSPSSSTSAPAEKKAKKDGKTGGAPPKQ. The segment covering 81–95 has biased composition (low complexity); that stretch reads KATSTSSPSSSTSAP. Basic and acidic residues predominate over residues 96–105; the sequence is AEKKAKKDGK. Residues 252–254, His263, Tyr438, Asp442, and Gln466 contribute to the L-arginine site; that span reads SPN. Positions 252-263 match the 'HIGH' region motif; it reads SPNIAKEMHVGH. Residues 583-597 are interaction with tRNA; it reads NTAVYLLYAYTRIQS.

This sequence belongs to the class-I aminoacyl-tRNA synthetase family.

The protein resides in the cytoplasm. The protein localises to the cytosol. The catalysed reaction is tRNA(Arg) + L-arginine + ATP = L-arginyl-tRNA(Arg) + AMP + diphosphate. Its function is as follows. Forms part of a macromolecular complex that catalyzes the attachment of specific amino acids to cognate tRNAs during protein synthesis. In Caenorhabditis elegans, this protein is Probable arginine--tRNA ligase, cytoplasmic.